Consider the following 223-residue polypeptide: NLP effector protein 3 (223 aa).

A Conserved undecapeptide motif motif is present at residues 90–100 (AIMYVWYFPKD). Positions 107 to 113 (GHRHDWE) match the Conserved heptapeptide motif motif.

Belongs to the Necrosis inducing protein (NPP1) family.

The protein localises to the secreted. The protein resides in the host cytoplasm. Its function is as follows. Probable secreted effector that may act as a pathogen-associated molecular pattern (PAMP) recognized by the plant immune system. Seems not to induce necrosis, neither in several susceptible or resistant Vitis species nor in the dicot model plant Nicotiana benthamiana. The polypeptide is NLP effector protein 3 (Plasmopara viticola (Downy mildew of grapevine)).